The following is a 573-amino-acid chain: Urease subunit alpha (573 aa).

Residues 136 to 573 (GAIDCHVHLI…LPMAQRYFLF (438 aa)) enclose the Urease domain. Ni(2+) is bound by residues His-141, His-143, and Lys-224. Lys-224 is subject to N6-carboxylysine. His-226 provides a ligand contact to substrate. Residues His-253 and His-279 each coordinate Ni(2+). The active-site Proton donor is the His-327. A Ni(2+)-binding site is contributed by Asp-367.

It belongs to the metallo-dependent hydrolases superfamily. Urease alpha subunit family. As to quaternary structure, heterotrimer of UreA (gamma), UreB (beta) and UreC (alpha) subunits. Three heterotrimers associate to form the active enzyme. The cofactor is Ni cation. In terms of processing, carboxylation allows a single lysine to coordinate two nickel ions.

It is found in the cytoplasm. It carries out the reaction urea + 2 H2O + H(+) = hydrogencarbonate + 2 NH4(+). It functions in the pathway nitrogen metabolism; urea degradation; CO(2) and NH(3) from urea (urease route): step 1/1. In Mycobacterium sp. (strain JLS), this protein is Urease subunit alpha.